The following is a 311-amino-acid chain: Ribonuclease HIII (311 aa).

The region spanning 95–311 is the RNase H type-2 domain; the sequence is MSIVGSDEVG…NTEKAFRLLK (217 aa). A divalent metal cation contacts are provided by Asp101, Glu102, and Asp206.

The protein belongs to the RNase HII family. RnhC subfamily. Requires Mn(2+) as cofactor. It depends on Mg(2+) as a cofactor.

The protein resides in the cytoplasm. It carries out the reaction Endonucleolytic cleavage to 5'-phosphomonoester.. In terms of biological role, endonuclease that specifically degrades the RNA of RNA-DNA hybrids. The polypeptide is Ribonuclease HIII (Bacillus cereus (strain 03BB102)).